Consider the following 397-residue polypeptide: Vacuolar protein sorting-associated protein 37A (397 aa).

Residues 1 to 22 (MSWLFPLTKSASSSAAGSPGGL) are disordered. S18 bears the Phosphoserine mark. The region spanning 308-397 (KSTFEKKMQR…AMHSQFHAPL (90 aa)) is the VPS37 C-terminal domain.

Belongs to the VPS37 family. In terms of assembly, component of the ESCRT-I complex (endosomal sorting complex required for transport I) which consists of TSG101, VPS28, a VPS37 protein (VPS37A to -D) and MVB12A or MVB12B in a 1:1:1:1 stoichiometry. Interacts with TSG101, VPS28 and HGS. Component of an ESCRT-I complex (endosomal sorting complex required for transport I) which consists of TSG101, VPS28, VPS37A and UBAP1 in a 1:1:1:1 stoichiometry. Widely expressed. Examined tissues include heart, brain, placenta, liver, skeletal muscle, kidney and pancreas. More abundant in liver. Strongly decreased or undetected in hepatomas.

Its subcellular location is the late endosome membrane. It localises to the nucleus. In terms of biological role, component of the ESCRT-I complex, a regulator of vesicular trafficking process. Required for the sorting of endocytic ubiquitinated cargos into multivesicular bodies. May be involved in cell growth and differentiation. This Homo sapiens (Human) protein is Vacuolar protein sorting-associated protein 37A (VPS37A).